Here is a 733-residue protein sequence, read N- to C-terminus: MCDLSSALIKEGWYLTDEGIEECKSSSEKEKTSPTDIIQVALNNDLRPIGKSFLPADINSGRIEKLEGPCVLQVQKIRNVAASKDHEESQAAPRMLRVQMTDGHTACTGLEFKQLSKISLNTPPGTKVKLLGVVQVKNGILLLDDSKIAVLGGEVDHMIEKWEFQRSLAKHSRRNIGAEGGPPPFVPFGQKCVHKEQVDSRALDQRKTLQSTNAVKSADDNDEFEKQRTAAIAEVAKSKETRTFGGGGNAGGNLANPGSSYKSRDTYQRKREEREKPWTENKSDGVYRDLVDERALRDIMEMGFNREAARQALLDNNNNLEVALNLLLTRANQPRAAPVEQSRPPPRGKGRGKGRSRQDEDEEAGGRPSGPSTLFDFLESKMGTFSIDDSKPSQQDHQTKMNFSNSDQMSRDAGQFKPPPRNDGRSQRNDRPPRFQKDGDFPKPTPASSSFSQPQKWRDGERTGRGGGPERWKNESQDARNAPVSYSSSFSKSREQQGASGKELNKEQDGTGPASFRKIQSNGPAPPKFSTPADPKMRNEPNNRRKGRPERPNSGYFEHSQDALGKKDFQDEGQFVKVGPVSNTPLPNGDLEHRRTGPIKPHFSAPPPRQTNMHNPASKRRSGPIKGPRDSVDINNFVNWKAGDQCLALYWEDNKFYRARIDAVHPSGSTAVVVFSDYGNCEEVLLDSIKPLHMDDDEDVYYENSLEFRRGGDGQPRRSRPTQQYYQPPRARD.

Residues 241-281 (TRTFGGGGNAGGNLANPGSSYKSRDTYQRKREEREKPWTEN) are disordered. A compositionally biased stretch (basic and acidic residues) spans 262–281 (KSRDTYQRKREEREKPWTEN). Positions 290 to 330 (LVDERALRDIMEMGFNREAARQALLDNNNNLEVALNLLLTR) constitute a UBA domain. The tract at residues 333 to 630 (QPRAAPVEQS…RSGPIKGPRD (298 aa)) is disordered. The segment covering 346–355 (PRGKGRGKGR) has biased composition (basic residues). Residues 392–408 (PSQQDHQTKMNFSNSDQ) show a composition bias toward polar residues. A compositionally biased stretch (basic and acidic residues) spans 420-441 (PRNDGRSQRNDRPPRFQKDGDF). The span at 446-455 (PASSSFSQPQ) shows a compositional bias: polar residues. The segment covering 456-478 (KWRDGERTGRGGGPERWKNESQD) has biased composition (basic and acidic residues). Positions 484–499 (VSYSSSFSKSREQQGA) are enriched in polar residues. Positions 559-570 (HSQDALGKKDFQ) are enriched in basic and acidic residues. In terms of domain architecture, Tudor spans 639 to 699 (NWKAGDQCLA…KPLHMDDDED (61 aa)). Basic and acidic residues predominate over residues 706–716 (LEFRRGGDGQP). Positions 706-733 (LEFRRGGDGQPRRSRPTQQYYQPPRARD) are disordered.

As to quaternary structure, component of mRNA stress granules.

It is found in the cytoplasm. It localises to the nucleus. Scaffolding protein that specifically recognizes and binds dimethylarginine-containing proteins. Plays a role in the regulation of translation of target mRNAs by binding Arg/Gly-rich motifs (GAR) in dimethylarginine-containing proteins. In nucleus, acts as a coactivator: recognizes and binds asymmetric dimethylation on the core histone tails associated with transcriptional activation (H3R17me2a and H4R3me2a) and recruits proteins at these arginine-methylated loci. In cytoplasm, acts as an antiviral factor that participates in the assembly of stress granules together with G3BP1. The polypeptide is Tudor domain-containing protein 3 (tdrd3) (Danio rerio (Zebrafish)).